The following is a 110-amino-acid chain: BolA-like protein 3 (110 aa).

The protein belongs to the BolA/IbaG family. As to quaternary structure, interacts with NFU1.

It localises to the mitochondrion. Functionally, acts as a mitochondrial iron-sulfur (Fe-S) cluster assembly factor that facilitates (Fe-S) cluster insertion into a subset of mitochondrial proteins. Probably acts together with NFU1. The sequence is that of BolA-like protein 3 (Bola3) from Mus musculus (Mouse).